The primary structure comprises 480 residues: Glutamate--tRNA ligase (480 aa).

The 'HIGH' region motif lies at 12–22 (PSPTGAPHLGL). Residues 255–259 (KLSKR) carry the 'KMSKS' region motif. An ATP-binding site is contributed by Lys258.

Belongs to the class-I aminoacyl-tRNA synthetase family. Glutamate--tRNA ligase type 1 subfamily. As to quaternary structure, monomer.

Its subcellular location is the cytoplasm. The catalysed reaction is tRNA(Glu) + L-glutamate + ATP = L-glutamyl-tRNA(Glu) + AMP + diphosphate. In terms of biological role, catalyzes the attachment of glutamate to tRNA(Glu) in a two-step reaction: glutamate is first activated by ATP to form Glu-AMP and then transferred to the acceptor end of tRNA(Glu). In Tropheryma whipplei (strain TW08/27) (Whipple's bacillus), this protein is Glutamate--tRNA ligase.